A 296-amino-acid chain; its full sequence is Thioredoxin-related transmembrane protein 2 (296 aa).

An N-terminal signal peptide occupies residues methionine 1–serine 48. Over leucine 49–alanine 102 the chain is Extracellular. A helical transmembrane segment spans residues isoleucine 103–methionine 125. Residues threonine 126–lysine 296 are Cytoplasmic-facing. The 138-residue stretch at tyrosine 132–lysine 269 folds into the Thioredoxin domain. Phosphoserine occurs at positions 211 and 243. Positions aspartate 272–lysine 296 are disordered. Positions glutamate 277–valine 287 are enriched in low complexity. Residues lysine 293–lysine 296 carry the Di-lysine motif motif.

In terms of assembly, monomer. Homodimer; disulfide-linked. Occurs in both reduced and oxidized monomeric form. Oxidative conditions increase homodimerization. Interacts with CANX. Interacts with ATP2A2.

It is found in the endoplasmic reticulum membrane. The protein localises to the mitochondrion membrane. Its function is as follows. Endoplasmic reticulum and mitochondria-associated protein that probably functions as a regulator of cellular redox state and thereby regulates protein post-translational modification, protein folding and mitochondrial activity. Indirectly regulates neuronal proliferation, migration, and organization in the developing brain. The protein is Thioredoxin-related transmembrane protein 2 (TMX2) of Bos taurus (Bovine).